The chain runs to 312 residues: Ribosomal RNA small subunit methyltransferase H (312 aa).

S-adenosyl-L-methionine-binding positions include 32–34 (AGH), aspartate 51, phenylalanine 78, aspartate 99, and glutamine 106.

The protein belongs to the methyltransferase superfamily. RsmH family.

Its subcellular location is the cytoplasm. It catalyses the reaction cytidine(1402) in 16S rRNA + S-adenosyl-L-methionine = N(4)-methylcytidine(1402) in 16S rRNA + S-adenosyl-L-homocysteine + H(+). Specifically methylates the N4 position of cytidine in position 1402 (C1402) of 16S rRNA. The sequence is that of Ribosomal RNA small subunit methyltransferase H from Exiguobacterium sibiricum (strain DSM 17290 / CCUG 55495 / CIP 109462 / JCM 13490 / 255-15).